A 201-amino-acid polypeptide reads, in one-letter code: ATP-dependent Clp protease proteolytic subunit (201 aa).

S101 functions as the Nucleophile in the catalytic mechanism. H126 is a catalytic residue.

The protein belongs to the peptidase S14 family. In terms of assembly, fourteen ClpP subunits assemble into 2 heptameric rings which stack back to back to give a disk-like structure with a central cavity, resembling the structure of eukaryotic proteasomes.

The protein resides in the cytoplasm. The enzyme catalyses Hydrolysis of proteins to small peptides in the presence of ATP and magnesium. alpha-casein is the usual test substrate. In the absence of ATP, only oligopeptides shorter than five residues are hydrolyzed (such as succinyl-Leu-Tyr-|-NHMec, and Leu-Tyr-Leu-|-Tyr-Trp, in which cleavage of the -Tyr-|-Leu- and -Tyr-|-Trp bonds also occurs).. In terms of biological role, cleaves peptides in various proteins in a process that requires ATP hydrolysis. Has a chymotrypsin-like activity. Plays a major role in the degradation of misfolded proteins. The chain is ATP-dependent Clp protease proteolytic subunit from Francisella philomiragia subsp. philomiragia (strain ATCC 25017 / CCUG 19701 / FSC 153 / O#319-036).